Here is a 315-residue protein sequence, read N- to C-terminus: MDPYELVTRNTVEVVTDEELRALIDRPVRRVYTGYEPSGEIHLGHMVTVNKLMDLQQAGFEVTVLIADLHAFLNRKGTMEEIRETAEYNRRCFEGLGLRGANYVLGSDVQLTPEYELAVLELSQAITLNRAKRSMDEVGRQMDNPTVSQMVYPIMQMVDIATLGVDAAVGGIDQRKIHMLAREHLPSIGYPAPVCIHTPIINGLDGKKMSSSAGNVISVADSEEDIKKKMKKAFCPPEVENNPVLEILRYHVFPRAGAVAIRRPEKFGGDREFAAYEDLERAYAAGEIHPLDLKNAAAAHLIDILAPVHDYVCSR.

Y32 contributes to the L-tyrosine binding site. Positions P37–H45 match the 'HIGH' region motif. L-tyrosine is bound by residues Y152, Q156, D159, and Q174. The short motif at K208–S212 is the 'KMSKS' region element. S211 contacts ATP.

The protein belongs to the class-I aminoacyl-tRNA synthetase family. TyrS type 3 subfamily. In terms of assembly, homodimer.

The protein localises to the cytoplasm. It catalyses the reaction tRNA(Tyr) + L-tyrosine + ATP = L-tyrosyl-tRNA(Tyr) + AMP + diphosphate + H(+). Its function is as follows. Catalyzes the attachment of tyrosine to tRNA(Tyr) in a two-step reaction: tyrosine is first activated by ATP to form Tyr-AMP and then transferred to the acceptor end of tRNA(Tyr). The protein is Tyrosine--tRNA ligase of Methanoculleus marisnigri (strain ATCC 35101 / DSM 1498 / JR1).